Consider the following 822-residue polypeptide: MEVFGDNKMFYMRDTWREGTMICDVLPINPSSNGVWPQQKFSDPNINVHFWNYAFPHLQMIFLIISFLWQFLHFFLRRLGMIRFTSHMLTGVLLSKSFLKENSAARRFFSTEDYKEIVFSLTAACSYMMFWFLMGVKMDTGLIRTTGRKAITIGLSSVLLSTLVCSVIFFGNLRDVGTKNSDHTLNSLEYVVIYSIQCLSSFPVVGNLLFELRLQNSELGRLAISSAVISDFSTSILASVLIFMKELKDEQTRLGSVFIGDVIAGNRPLMRAGIVVLFVCIAIYVFRPLMFYIIKQTPSGRPVKAIYLSTIIVMVSGSAILANWCKQSIFMGPFILGLAVPHGPPLGSAIIQKYESAIFGTFLPFFIASSSTEIDISALFGWEGLNGIILIMVTSFVVKFIFTTVPALFYGMPMEDCFALSLIMSFKGIFELGAYALAYQRGSVRPETFTVACLYITLNSAIIPPILRYLYDPSRMYAGYEKRNMQHLKPNSELRILSCIYRTDDISPMINLLEAICPSRESPVATYVLHLMELVGQANPIFISHKLQTRRTEETSYSNNVLVSFEKFRKDFYGSVFVSTYTALSMPDTMHGDICMLALNNTTSLILLPFHQTWSADGSALISNNNMIRNLNKSVLDVAPCSVGVFVYRSSSGRKNISSGRKTINGTVPNLSSYNICMIFLGGKDDREAVTLATRMARDPRINITIVRLITTDEKARENTVWDKMLDDELLRDVKSNTLVDIFYSEKAIEDAAETSSLLRSMVSDFDMFIVGRGNGRTSVFTEGLEEWSEFKELGIIGDLLTSQDFNCQASVLVIQQQQLMI.

12 helical membrane passes run 55–75, 116–136, 150–170, 190–210, 224–244, 274–294, 305–325, 331–351, 362–382, 388–408, 418–438, and 447–467; these read FPHL…LHFF, EIVF…LMGV, AITI…VIFF, YVVI…NLLF, ISSA…LIFM, IVVL…FYII, AIYL…ANWC, MGPF…SAII, FLPF…LFGW, IILI…VPAL, FALS…YALA, and ETFT…PPIL.

This sequence belongs to the monovalent cation:proton antiporter 2 (CPA2) transporter (TC 2.A.37) family. CHX (TC 2.A.37.4) subfamily.

It localises to the membrane. May operate as a cation/H(+) antiporter. This chain is Cation/H(+) antiporter 3 (CHX3), found in Arabidopsis thaliana (Mouse-ear cress).